A 741-amino-acid chain; its full sequence is Beta-galactosidase 10 (741 aa).

The signal sequence occupies residues methionine 1 to alanine 29. Asparagine 31 is a glycosylation site (N-linked (GlcNAc...) asparagine). The active-site Proton donor is the glutamate 188. Glutamate 257 (nucleophile) is an active-site residue. Asparagine 358, asparagine 396, asparagine 469, asparagine 525, and asparagine 583 each carry an N-linked (GlcNAc...) asparagine glycan.

The protein belongs to the glycosyl hydrolase 35 family. Ubiquitous.

Its subcellular location is the secreted. It is found in the extracellular space. The protein resides in the apoplast. The catalysed reaction is Hydrolysis of terminal non-reducing beta-D-galactose residues in beta-D-galactosides.. The protein is Beta-galactosidase 10 (BGAL10) of Arabidopsis thaliana (Mouse-ear cress).